Here is a 360-residue protein sequence, read N- to C-terminus: Photosystem II protein D1 (360 aa).

Helical transmembrane passes span 29 to 46 (YIGW…TATS), 118 to 133 (HFLL…EWEF), and 142 to 156 (WISV…AASA). H118 provides a ligand contact to chlorophyll a. Y126 serves as a coordination point for pheophytin a. D170 and E189 together coordinate [CaMn4O5] cluster. A helical membrane pass occupies residues 197–218 (LHQLGVAGVFGGSLFSAMHGSL). Residue H198 coordinates chlorophyll a. A quinone is bound by residues H215 and 264–265 (SF). Residue H215 coordinates Fe cation. Position 272 (H272) interacts with Fe cation. A helical transmembrane segment spans residues 274-288 (FLGLWPVVGIWFTSM). [CaMn4O5] cluster-binding residues include H332, E333, D342, and A344. Positions 345–360 (SNESLPLALVAPAING) are excised as a propeptide.

It belongs to the reaction center PufL/M/PsbA/D family. PSII is composed of 1 copy each of membrane proteins PsbA, PsbB, PsbC, PsbD, PsbE, PsbF, PsbH, PsbI, PsbJ, PsbK, PsbL, PsbM, PsbT, PsbX, PsbY, PsbZ, Psb30/Ycf12, at least 3 peripheral proteins of the oxygen-evolving complex and a large number of cofactors. It forms dimeric complexes. It depends on The D1/D2 heterodimer binds P680, chlorophylls that are the primary electron donor of PSII, and subsequent electron acceptors. It shares a non-heme iron and each subunit binds pheophytin, quinone, additional chlorophylls, carotenoids and lipids. D1 provides most of the ligands for the Mn4-Ca-O5 cluster of the oxygen-evolving complex (OEC). There is also a Cl(-1) ion associated with D1 and D2, which is required for oxygen evolution. The PSII complex binds additional chlorophylls, carotenoids and specific lipids. as a cofactor. Post-translationally, tyr-161 forms a radical intermediate that is referred to as redox-active TyrZ, YZ or Y-Z. In terms of processing, C-terminally processed by CTPA; processing is essential to allow assembly of the oxygen-evolving complex and thus photosynthetic growth.

Its subcellular location is the plastid. The protein localises to the chloroplast thylakoid membrane. The enzyme catalyses 2 a plastoquinone + 4 hnu + 2 H2O = 2 a plastoquinol + O2. Photosystem II (PSII) is a light-driven water:plastoquinone oxidoreductase that uses light energy to abstract electrons from H(2)O, generating O(2) and a proton gradient subsequently used for ATP formation. It consists of a core antenna complex that captures photons, and an electron transfer chain that converts photonic excitation into a charge separation. The D1/D2 (PsbA/PsbD) reaction center heterodimer binds P680, the primary electron donor of PSII as well as several subsequent electron acceptors. The chain is Photosystem II protein D1 from Antithamnion sp. (Red alga).